Consider the following 39-residue polypeptide: Cytochrome b559 subunit beta (39 aa).

The helical transmembrane segment at 14–30 threads the bilayer; the sequence is WLAVHGLAVPTVSFLGS. His18 contributes to the heme binding site.

This sequence belongs to the PsbE/PsbF family. In terms of assembly, heterodimer of an alpha subunit and a beta subunit. PSII is composed of 1 copy each of membrane proteins PsbA, PsbB, PsbC, PsbD, PsbE, PsbF, PsbH, PsbI, PsbJ, PsbK, PsbL, PsbM, PsbT, PsbX, PsbY, PsbZ, Psb30/Ycf12, at least 3 peripheral proteins of the oxygen-evolving complex and a large number of cofactors. It forms dimeric complexes. It depends on heme b as a cofactor.

It localises to the plastid. The protein resides in the chloroplast thylakoid membrane. Functionally, this b-type cytochrome is tightly associated with the reaction center of photosystem II (PSII). PSII is a light-driven water:plastoquinone oxidoreductase that uses light energy to abstract electrons from H(2)O, generating O(2) and a proton gradient subsequently used for ATP formation. It consists of a core antenna complex that captures photons, and an electron transfer chain that converts photonic excitation into a charge separation. In Lotus japonicus (Lotus corniculatus var. japonicus), this protein is Cytochrome b559 subunit beta.